A 357-amino-acid polypeptide reads, in one-letter code: Uroporphyrinogen decarboxylase (357 aa).

Residues 27-31 (RQAGR), D77, Y154, S209, and H330 each bind substrate.

This sequence belongs to the uroporphyrinogen decarboxylase family. Homodimer.

It is found in the cytoplasm. It carries out the reaction uroporphyrinogen III + 4 H(+) = coproporphyrinogen III + 4 CO2. It participates in porphyrin-containing compound metabolism; protoporphyrin-IX biosynthesis; coproporphyrinogen-III from 5-aminolevulinate: step 4/4. In terms of biological role, catalyzes the decarboxylation of four acetate groups of uroporphyrinogen-III to yield coproporphyrinogen-III. The protein is Uroporphyrinogen decarboxylase of Acinetobacter baumannii (strain AB0057).